Reading from the N-terminus, the 156-residue chain is uncharacterized protein (156 aa).

The next 5 helical transmembrane spans lie at 7 to 29, 42 to 64, 69 to 88, 98 to 120, and 133 to 155; these read AQIS…SYFL, YFAL…PYLF, AVTG…AITS, AAIW…YPAL, and ALVL…ISRI.

The protein resides in the cell membrane. This is an uncharacterized protein from Pasteurella multocida (strain Pm70).